The following is a 240-amino-acid chain: UDP-2,3-diacylglucosamine hydrolase (240 aa).

Mn(2+) contacts are provided by aspartate 8, histidine 10, aspartate 41, asparagine 79, and histidine 114. 79 to 80 lines the substrate pocket; the sequence is NR. Residues aspartate 122, serine 160, asparagine 164, lysine 167, and histidine 195 each coordinate substrate. Mn(2+)-binding residues include histidine 195 and histidine 197.

It belongs to the LpxH family. Mn(2+) is required as a cofactor.

It localises to the cell inner membrane. It carries out the reaction UDP-2-N,3-O-bis[(3R)-3-hydroxytetradecanoyl]-alpha-D-glucosamine + H2O = 2-N,3-O-bis[(3R)-3-hydroxytetradecanoyl]-alpha-D-glucosaminyl 1-phosphate + UMP + 2 H(+). It participates in glycolipid biosynthesis; lipid IV(A) biosynthesis; lipid IV(A) from (3R)-3-hydroxytetradecanoyl-[acyl-carrier-protein] and UDP-N-acetyl-alpha-D-glucosamine: step 4/6. In terms of biological role, hydrolyzes the pyrophosphate bond of UDP-2,3-diacylglucosamine to yield 2,3-diacylglucosamine 1-phosphate (lipid X) and UMP by catalyzing the attack of water at the alpha-P atom. Involved in the biosynthesis of lipid A, a phosphorylated glycolipid that anchors the lipopolysaccharide to the outer membrane of the cell. In Yersinia pestis bv. Antiqua (strain Angola), this protein is UDP-2,3-diacylglucosamine hydrolase.